The following is a 136-amino-acid chain: Aspartate 1-decarboxylase (136 aa).

Ser-25 acts as the Schiff-base intermediate with substrate; via pyruvic acid in catalysis. Ser-25 carries the pyruvic acid (Ser) modification. Residue Thr-57 participates in substrate binding. The active-site Proton donor is Tyr-58. 73–75 (GAA) lines the substrate pocket. The disordered stretch occupies residues 117–136 (IFQLGEETTPEEAPSLEQRN).

It belongs to the PanD family. In terms of assembly, heterooctamer of four alpha and four beta subunits. Pyruvate is required as a cofactor. Post-translationally, is synthesized initially as an inactive proenzyme, which is activated by self-cleavage at a specific serine bond to produce a beta-subunit with a hydroxyl group at its C-terminus and an alpha-subunit with a pyruvoyl group at its N-terminus.

The protein localises to the cytoplasm. The catalysed reaction is L-aspartate + H(+) = beta-alanine + CO2. The protein operates within cofactor biosynthesis; (R)-pantothenate biosynthesis; beta-alanine from L-aspartate: step 1/1. Catalyzes the pyruvoyl-dependent decarboxylation of aspartate to produce beta-alanine. The sequence is that of Aspartate 1-decarboxylase from Chloroherpeton thalassium (strain ATCC 35110 / GB-78).